We begin with the raw amino-acid sequence, 78 residues long: Acyl carrier protein (78 aa).

The Carrier domain maps to 1 to 77 (MALIDEIKDV…DAAKYIEEHK (77 aa)). Ser37 carries the post-translational modification O-(pantetheine 4'-phosphoryl)serine.

This sequence belongs to the acyl carrier protein (ACP) family. 4'-phosphopantetheine is transferred from CoA to a specific serine of apo-ACP by AcpS. This modification is essential for activity because fatty acids are bound in thioester linkage to the sulfhydryl of the prosthetic group.

The protein resides in the secreted. Its pathway is lipid metabolism; fatty acid biosynthesis. In terms of biological role, carrier of the growing fatty acid chain in fatty acid biosynthesis. Has hemolytic activity forming pores approximately 1 nm in diameter into erythrocytes. Is able to induce murine colonic lesions and to disrupt the integrity of epithelial cell monolayers. The sequence is that of Acyl carrier protein (acpP) from Brachyspira hyodysenteriae (Treponema hyodysenteriae).